A 92-amino-acid polypeptide reads, in one-letter code: DNA-binding protein HU-alpha (92 aa).

This sequence belongs to the bacterial histone-like protein family. Heterodimer of an alpha and a beta chain.

Its function is as follows. Histone-like DNA-binding protein which is capable of wrapping DNA to stabilize it, and thus to prevent its denaturation under extreme environmental conditions. This chain is DNA-binding protein HU-alpha (hupA), found in Burkholderia pseudomallei (strain K96243).